Here is a 344-residue protein sequence, read N- to C-terminus: AA9 family lytic polysaccharide monooxygenase D (344 aa).

A signal peptide spans 1–23; the sequence is MKTATSYAAFLLSALAALPHASA. Histidine 24 provides a ligand contact to Cu(2+). Cysteine 70 and cysteine 193 are disulfide-bonded. Histidine 179 provides a ligand contact to O2. Tyrosine 190 provides a ligand contact to Cu(2+). Asparagine 201 and asparagine 207 each carry an N-linked (GlcNAc...) asparagine glycan. The interval 240–321 is disordered; the sequence is PPLSNLVSGD…PTTSGNLSAN (82 aa). The segment covering 259–292 has biased composition (low complexity); that stretch reads STSSATLSGGAAPTGTASGSTPAGTSQPSSTTGT. Positions 311–320 are enriched in polar residues; sequence APTTSGNLSA. Asparagine 317 carries N-linked (GlcNAc...) asparagine glycosylation.

This sequence belongs to the polysaccharide monooxygenase AA9 family. The cofactor is Cu(2+).

The protein resides in the secreted. The catalysed reaction is [(1-&gt;4)-beta-D-glucosyl]n+m + reduced acceptor + O2 = 4-dehydro-beta-D-glucosyl-[(1-&gt;4)-beta-D-glucosyl]n-1 + [(1-&gt;4)-beta-D-glucosyl]m + acceptor + H2O.. Its function is as follows. Lytic polysaccharide monooxygenase (LPMO) that depolymerizes crystalline and amorphous polysaccharides via the oxidation of scissile alpha- or beta-(1-4)-glycosidic bonds, yielding C1 or C4 oxidation products. Catalysis by LPMOs requires the reduction of the active-site copper from Cu(II) to Cu(I) by a reducing agent and H(2)O(2) or O(2) as a cosubstrate. This is AA9 family lytic polysaccharide monooxygenase D from Gloeophyllum trabeum (strain ATCC 11539 / FP-39264 / Madison 617) (Brown rot fungus).